Here is a 415-residue protein sequence, read N- to C-terminus: Gamma-glutamyl phosphate reductase (415 aa).

The protein belongs to the gamma-glutamyl phosphate reductase family.

The protein localises to the cytoplasm. The catalysed reaction is L-glutamate 5-semialdehyde + phosphate + NADP(+) = L-glutamyl 5-phosphate + NADPH + H(+). Its pathway is amino-acid biosynthesis; L-proline biosynthesis; L-glutamate 5-semialdehyde from L-glutamate: step 2/2. Its function is as follows. Catalyzes the NADPH-dependent reduction of L-glutamate 5-phosphate into L-glutamate 5-semialdehyde and phosphate. The product spontaneously undergoes cyclization to form 1-pyrroline-5-carboxylate. The sequence is that of Gamma-glutamyl phosphate reductase from Listeria monocytogenes serotype 4a (strain HCC23).